We begin with the raw amino-acid sequence, 631 residues long: Dolichyl-diphosphooligosaccharide--protein glycosyltransferase subunit 2 (631 aa).

An N-terminal signal peptide occupies residues 1–22; it reads MAPPGSSAVFLLALTITASTQA. At 23 to 540 the chain is on the lumenal side; sequence LTPTHYLTKH…REPEKRPPTV (518 aa). Asn106 is a glycosylation site (N-linked (GlcNAc...) asparagine). Lys154 participates in a covalent cross-link: Glycyl lysine isopeptide (Lys-Gly) (interchain with G-Cter in ubiquitin). The chain crosses the membrane as a helical span at residues 541–561; sequence VSNTFTALILSPLLLLFALWI. Residues 562-571 lie on the Cytoplasmic side of the membrane; it reads RIGANVSNFT. A helical transmembrane segment spans residues 572 to 592; sequence FAPSTVIFHLGHAAMLGLMYV. At 593–596 the chain is on the lumenal side; the sequence is YWTQ. The chain crosses the membrane as a helical span at residues 597-617; the sequence is LNMFQTLKYLAVLGTVTFLAG. Residues 618–631 are Cytoplasmic-facing; the sequence is NRMLAQQAVKRTAH.

This sequence belongs to the SWP1 family. In terms of assembly, component of the oligosaccharyltransferase (OST) complex. OST exists in two different complex forms which contain common core subunits RPN1, RPN2, OST48, OST4, DAD1 and TMEM258, either STT3A or STT3B as catalytic subunits, and form-specific accessory subunits. STT3A complex assembly occurs through the formation of 3 subcomplexes. Subcomplex 1 contains RPN1 and TMEM258, subcomplex 2 contains the STT3A-specific subunits STT3A, DC2/OSTC, and KCP2 as well as the core subunit OST4, and subcomplex 3 contains RPN2, DAD1, and OST48. The STT3A complex can form stable complexes with the Sec61 complex or with both the Sec61 and TRAP complexes. Interacts with DDI2. Interacts with TMEM35A/NACHO.

It is found in the endoplasmic reticulum. It localises to the endoplasmic reticulum membrane. Its pathway is protein modification; protein glycosylation. In terms of biological role, subunit of the oligosaccharyl transferase (OST) complex that catalyzes the initial transfer of a defined glycan (Glc(3)Man(9)GlcNAc(2) in eukaryotes) from the lipid carrier dolichol-pyrophosphate to an asparagine residue within an Asn-X-Ser/Thr consensus motif in nascent polypeptide chains, the first step in protein N-glycosylation. N-glycosylation occurs cotranslationally and the complex associates with the Sec61 complex at the channel-forming translocon complex that mediates protein translocation across the endoplasmic reticulum (ER). All subunits are required for a maximal enzyme activity. This chain is Dolichyl-diphosphooligosaccharide--protein glycosyltransferase subunit 2, found in Rattus norvegicus (Rat).